The chain runs to 149 residues: Pleckstrin homology domain-containing family J member 1 (149 aa).

The region spanning 15-108 (PAEKAAEILM…WIEALKRASY (94 aa)) is the PH domain.

The sequence is that of Pleckstrin homology domain-containing family J member 1 (PLEKHJ1) from Gallus gallus (Chicken).